The following is a 570-amino-acid chain: Proline--tRNA ligase (570 aa).

This sequence belongs to the class-II aminoacyl-tRNA synthetase family. ProS type 1 subfamily. As to quaternary structure, homodimer.

The protein resides in the cytoplasm. It catalyses the reaction tRNA(Pro) + L-proline + ATP = L-prolyl-tRNA(Pro) + AMP + diphosphate. In terms of biological role, catalyzes the attachment of proline to tRNA(Pro) in a two-step reaction: proline is first activated by ATP to form Pro-AMP and then transferred to the acceptor end of tRNA(Pro). As ProRS can inadvertently accommodate and process non-cognate amino acids such as alanine and cysteine, to avoid such errors it has two additional distinct editing activities against alanine. One activity is designated as 'pretransfer' editing and involves the tRNA(Pro)-independent hydrolysis of activated Ala-AMP. The other activity is designated 'posttransfer' editing and involves deacylation of mischarged Ala-tRNA(Pro). The misacylated Cys-tRNA(Pro) is not edited by ProRS. The sequence is that of Proline--tRNA ligase from Shewanella sp. (strain ANA-3).